A 62-amino-acid polypeptide reads, in one-letter code: Protein DsrB (62 aa).

Belongs to the DsrB family.

This chain is Protein DsrB, found in Escherichia fergusonii (strain ATCC 35469 / DSM 13698 / CCUG 18766 / IAM 14443 / JCM 21226 / LMG 7866 / NBRC 102419 / NCTC 12128 / CDC 0568-73).